A 155-amino-acid polypeptide reads, in one-letter code: Fibroblast growth factor 2 (155 aa).

Positions 1–9 are excised as a propeptide; that stretch reads MAAGSITTL. The interval 1–20 is disordered; that stretch reads MAAGSITTLPALPEDGGSSA. A heparin-binding site is contributed by Asn36. The short motif at 46 to 48 is the Cell attachment site; atypical element; it reads DGR. Tyr82 is modified (phosphotyrosine; by TEC). Positions 88–90 match the Cell attachment site; atypical motif; it reads DGR. Lys95 is covalently cross-linked (Glycyl lysine isopeptide (Lys-Gly) (interchain with G-Cter in SUMO1)). The segment at 128-144 is heparin-binding; the sequence is KRTGQYKLGPKTGPGQK.

Belongs to the heparin-binding growth factors family. Monomer. Homodimer. Interacts with FGFR1, FGFR2, FGFR3 and FGFR4. Affinity between fibroblast growth factors (FGFs) and their receptors is increased by heparan sulfate glycosaminoglycans that function as coreceptors. Interacts with CSPG4, FGFBP1 and TEC. Found in a complex with FGFBP1, FGF1 and FGF2. Interacts with FGFBP3. Interacts with integrin ITGAV:ITGB3; the interaction is required for FGF2 signaling. Interacts with SNORC (via the extracellular domain). Interacts with glypican GPC3. Post-translationally, phosphorylation at Tyr-82 regulates FGF2 unconventional secretion.

Its subcellular location is the secreted. It is found in the nucleus. Functionally, acts as a ligand for FGFR1, FGFR2, FGFR3 and FGFR4. Also acts as an integrin ligand which is required for FGF2 signaling. Binds to integrin ITGAV:ITGB3. Plays an important role in the regulation of cell survival, cell division, cell differentiation and cell migration. Functions as a potent mitogen in vitro. Can induce angiogenesis. Mediates phosphorylation of ERK1/2 and thereby promotes retinal lens fiber differentiation. The polypeptide is Fibroblast growth factor 2 (FGF2) (Ovis aries (Sheep)).